Here is a 266-residue protein sequence, read N- to C-terminus: Thymidylate synthase (266 aa).

DUMP is bound at residue R24. (6R)-5,10-methylene-5,6,7,8-tetrahydrofolate is bound at residue H54. 129–130 lines the dUMP pocket; it reads RR. The active-site Nucleophile is C149. Residues 169-172, N180, and 210-212 contribute to the dUMP site; these read RSAD and HIY. Residue D172 participates in (6R)-5,10-methylene-5,6,7,8-tetrahydrofolate binding. A265 is a binding site for (6R)-5,10-methylene-5,6,7,8-tetrahydrofolate.

This sequence belongs to the thymidylate synthase family. Bacterial-type ThyA subfamily. In terms of assembly, homodimer.

The protein localises to the cytoplasm. The catalysed reaction is dUMP + (6R)-5,10-methylene-5,6,7,8-tetrahydrofolate = 7,8-dihydrofolate + dTMP. Its pathway is pyrimidine metabolism; dTTP biosynthesis. Functionally, catalyzes the reductive methylation of 2'-deoxyuridine-5'-monophosphate (dUMP) to 2'-deoxythymidine-5'-monophosphate (dTMP) while utilizing 5,10-methylenetetrahydrofolate (mTHF) as the methyl donor and reductant in the reaction, yielding dihydrofolate (DHF) as a by-product. This enzymatic reaction provides an intracellular de novo source of dTMP, an essential precursor for DNA biosynthesis. The polypeptide is Thymidylate synthase (Nocardia farcinica (strain IFM 10152)).